The following is a 463-amino-acid chain: UDP-N-acetylmuramoylalanine--D-glutamate ligase (463 aa).

Position 109-115 (109-115 (GTDGKST)) interacts with ATP.

The protein belongs to the MurCDEF family.

It is found in the cytoplasm. The catalysed reaction is UDP-N-acetyl-alpha-D-muramoyl-L-alanine + D-glutamate + ATP = UDP-N-acetyl-alpha-D-muramoyl-L-alanyl-D-glutamate + ADP + phosphate + H(+). Its pathway is cell wall biogenesis; peptidoglycan biosynthesis. In terms of biological role, cell wall formation. Catalyzes the addition of glutamate to the nucleotide precursor UDP-N-acetylmuramoyl-L-alanine (UMA). The polypeptide is UDP-N-acetylmuramoylalanine--D-glutamate ligase (Leptospira interrogans serogroup Icterohaemorrhagiae serovar Lai (strain 56601)).